The following is a 694-amino-acid chain: Methionine--tRNA ligase (694 aa).

The 'HIGH' region signature appears at 12–22 (PYANGPLHLGH). Zn(2+) contacts are provided by Cys143, Cys146, Cys156, and Cys159. Residues 330–334 (KMSKS) carry the 'KMSKS' region motif. ATP is bound at residue Lys333. A disordered region spans residues 552-577 (APAAPAATTKPAPSKADAAPAAVANP). One can recognise a tRNA-binding domain in the interval 591 to 694 (DFAKLDLRIG…AGAQPGMPVR (104 aa)).

The protein belongs to the class-I aminoacyl-tRNA synthetase family. MetG type 1 subfamily. Homodimer. Requires Zn(2+) as cofactor.

The protein localises to the cytoplasm. The enzyme catalyses tRNA(Met) + L-methionine + ATP = L-methionyl-tRNA(Met) + AMP + diphosphate. In terms of biological role, is required not only for elongation of protein synthesis but also for the initiation of all mRNA translation through initiator tRNA(fMet) aminoacylation. This chain is Methionine--tRNA ligase, found in Xanthomonas campestris pv. campestris (strain B100).